The primary structure comprises 278 residues: HTH-type transcriptional activator RhaS (278 aa).

In terms of domain architecture, HTH araC/xylS-type spans 174–272 (NLLLAWLEDH…NWSPRDIRQG (99 aa)). 2 DNA-binding regions (H-T-H motif) span residues 191-212 (DAVA…KQQT) and 239-262 (VTDI…RREF).

As to quaternary structure, binds DNA as a dimer.

The protein resides in the cytoplasm. Activates expression of the rhaBAD and rhaT operons. This is HTH-type transcriptional activator RhaS from Shigella sonnei (strain Ss046).